The primary structure comprises 349 residues: Protein RecA (349 aa).

ATP is bound at residue 65 to 72; sequence GPESSGKT.

The protein belongs to the RecA family.

The protein localises to the cytoplasm. Its function is as follows. Can catalyze the hydrolysis of ATP in the presence of single-stranded DNA, the ATP-dependent uptake of single-stranded DNA by duplex DNA, and the ATP-dependent hybridization of homologous single-stranded DNAs. It interacts with LexA causing its activation and leading to its autocatalytic cleavage. The protein is Protein RecA of Clostridium acetobutylicum (strain ATCC 824 / DSM 792 / JCM 1419 / IAM 19013 / LMG 5710 / NBRC 13948 / NRRL B-527 / VKM B-1787 / 2291 / W).